The chain runs to 474 residues: E3 ubiquitin-protein ligase RNF14 (474 aa).

The RWD domain maps to 11-137 (DELLALASIY…QFLKEETLAY (127 aa)). A D-box motif is present at residues 37–45 (RIYLDLPQN). Residues 216–457 (KLFLCSICFC…DPGSPCFNRL (242 aa)) form a TRIAD supradomain region. The Zn(2+) site is built by cysteine 220, cysteine 223, cysteine 238, histidine 240, cysteine 243, cysteine 246, cysteine 265, cysteine 270, cysteine 309, cysteine 314, cysteine 329, cysteine 332, cysteine 337, cysteine 340, and histidine 345. Residues 220–270 (CSICFCEKLGSECMYFLECRHVYCKACLKDYFEIQIRDGQVQCLNCPEPKC) form an RING-type 1 zinc finger. The IBR-type zinc finger occupies 289–350 (ARYDRLLLQS…RLTYHGVSPC (62 aa)). Residue serine 348 is modified to Phosphoserine. Residue cysteine 350 participates in Zn(2+) binding. The stretch at 351-395 (KVTAEKLMDLRNEYLQADEANKRLLDQRYGKRVIQKALEEMESKE) forms a coiled coil. An interaction with androgen receptor region spans residues 361–474 (RNEYLQADEA…DDIWEDEVED (114 aa)). Cysteine 404 and cysteine 407 together coordinate Zn(2+). Residues 404–433 (CPCCGTPIEKLDGCNKMTCTGCMQYFCWIC) form an RING-type 2; atypical zinc finger. The active site involves cysteine 417. 6 residues coordinate Zn(2+): cysteine 422, cysteine 425, cysteine 430, cysteine 433, histidine 445, and cysteine 453.

It belongs to the RBR family. RNF14 subfamily. Interacts with GCN1; interaction takes place in response to ribosome collisions and is required for ubiquitination of EEF1A1/eEF1A. Interacts with the ubiquitin-conjugating enzymes UBE2E1 and UBE2E2. Interacts with AR/androgen receptor. Interacts with TCF7/TCF1, TCF7L1/TCF3 and TCF7L2/TCF4; promoting Wnt signaling. RING-type zinc finger-dependent and UBE2E2-dependent autoubiquitination. As to expression, widely expressed.

It localises to the cytoplasm. It is found in the nucleus. It carries out the reaction [E2 ubiquitin-conjugating enzyme]-S-ubiquitinyl-L-cysteine + [acceptor protein]-L-lysine = [E2 ubiquitin-conjugating enzyme]-L-cysteine + [acceptor protein]-N(6)-ubiquitinyl-L-lysine.. Its pathway is protein modification; protein ubiquitination. In terms of biological role, E3 ubiquitin-protein ligase that plays a key role in the RNF14-RNF25 translation quality control pathway, a pathway that takes place when a ribosome has stalled during translation, and which promotes ubiquitination and degradation of translation factors on stalled ribosomes. Recruited to stalled ribosomes by the ribosome collision sensor GCN1 and mediates 'Lys-6'-linked ubiquitination of target proteins, leading to their degradation. Mediates ubiquitination of EEF1A1/eEF1A and ETF1/eRF1 translation factors on stalled ribosomes, leading to their degradation. Also catalyzes ubiquitination of ribosomal proteins RPL0, RPL1, RPL12, RPS13 and RPS17. Specifically required to resolve RNA-protein cross-links caused by reactive aldehydes, which trigger translation stress by stalling ribosomes: acts by catalying 'Lys-6'-linked ubiquitination of RNA-protein cross-links, leading to their removal by the ATP-dependent unfoldase VCP and subsequent degradation by the proteasome. Independently of its function in the response to stalled ribosomes, acts as a regulator of transcription in Wnt signaling via its interaction with TCF transcription factors (TCF7/TCF1, TCF7L1/TCF3 and TCF7L2/TCF4). May also play a role as a coactivator for androgen- and, to a lesser extent, progesterone-dependent transcription. This chain is E3 ubiquitin-protein ligase RNF14, found in Homo sapiens (Human).